The primary structure comprises 939 residues: Intimin (939 aa).

Positions Met-1–Gly-41 are cleaved as a signal peptide. The peptidoglycan-binding stretch occupies residues Asn-40–Thr-153. The interval Asn-40–Thr-153 is sufficient for homodimerization. Residues Asn-40 to Thr-212 form a required for periplasmic localization region. Positions Leu-63 to Leu-112 constitute a LysM domain. Positions Asp-189–Leu-430 are inverse autotransporter. The tract at residues Leu-402–Phe-411 is signature sequence for beta-barrel assembly machinery (BAM), which recognizes the unfolded beta-barrel in the periplasm. 2 consecutive Big-1 domains span residues Val-560–Val-653 and Ile-660–Phe-751. The interval Phe-750–Lys-939 is required and sufficient for interaction with intimin receptor Tir. The segment at Leu-842–Lys-939 is C-type lectin domain. Positions Leu-842–Lys-939 are intimin receptor Tir-binding. Residues Cys-860 and Cys-937 are joined by a disulfide bond.

Belongs to the intimin/invasin family. In terms of assembly, homodimer. Interacts with Tir.

It localises to the cell outer membrane. Its function is as follows. An inverse autotransporter. Adhesin, which mediates attachment to the human intestine epithelial cells. Necessary for the production of attaching and effacing lesions on infected human tissue culture cells. Anchored to the outer membrane by binding to peptidoglycan (PGN) via its periplasmic domain, thus helping in receptor interactions during host invasion. PGN-binding may also aid in resisting mechanical and chemical stress during transit of the bacterium through the gastrointestinal tract of the host. Periplasmic domain binds purified E.coli PGN sacculi under acidic conditions in vitro and in vivo, but does not bind to chitin. Periplasmic domain binds PGN sacculi with an apparent dissociation constant (Kd) of 0.8 uM. No binding to PGN in vitro at normal physiological pH 7.4. The chain is Intimin from Escherichia coli O127:H6 (strain E2348/69 / EPEC).